Reading from the N-terminus, the 92-residue chain is Large ribosomal subunit protein uL24c (92 aa).

Belongs to the universal ribosomal protein uL24 family. As to quaternary structure, part of the 50S ribosomal subunit.

It localises to the plastid. Its subcellular location is the chloroplast. In terms of biological role, one of two assembly initiator proteins, it binds directly to the 5'-end of the 23S rRNA, where it nucleates assembly of the 50S subunit. The sequence is that of Large ribosomal subunit protein uL24c (rpl24) from Gracilaria tenuistipitata var. liui (Red alga).